Consider the following 168-residue polypeptide: MPLLDSFKVDHTRMNAPAVRVAKTMRTPKGDNITVFDLRFCIPNKEILSPKGIHTLEHLFAGFMRDHLNSEQIEIIDISPMGCRTGFYMSLIGMPNEQQVANAWSASMQDILNVKNQAEIPELNEYQCGTYTEHSLEDAHNIARNILNRGVGINKNEDLLLDDNLLNS.

Fe cation-binding residues include His-54, His-58, and Cys-128.

Belongs to the LuxS family. Homodimer. It depends on Fe cation as a cofactor.

It catalyses the reaction S-(5-deoxy-D-ribos-5-yl)-L-homocysteine = (S)-4,5-dihydroxypentane-2,3-dione + L-homocysteine. In terms of biological role, involved in the synthesis of autoinducer 2 (AI-2) which is secreted by bacteria and is used to communicate both the cell density and the metabolic potential of the environment. The regulation of gene expression in response to changes in cell density is called quorum sensing. Catalyzes the transformation of S-ribosylhomocysteine (RHC) to homocysteine (HC) and 4,5-dihydroxy-2,3-pentadione (DPD). In Histophilus somni (strain 2336) (Haemophilus somnus), this protein is S-ribosylhomocysteine lyase.